We begin with the raw amino-acid sequence, 1809 residues long: Stereocilin (1809 aa).

Positions 1–22 are cleaved as a signal peptide; the sequence is MALSLQPQLLLLLSLLPQEVTS. Asn63, Asn200, Asn295, Asn352, and Asn364 each carry an N-linked (GlcNAc...) asparagine glycan. Residues 376–426 are disordered; sequence PATPRPPPTTPRPPPTTPQPPPTTTQPIPDTTQPPPVTPRPPPTTPQPPPS. Composition is skewed to pro residues over residues 378 to 399 and 407 to 426; these read TPRP…PPTT and TQPP…PPPS. N-linked (GlcNAc...) asparagine glycans are attached at residues Asn467, Asn516, Asn580, Asn605, Asn696, Asn860, Asn952, Asn1000, Asn1213, and Asn1308.

This sequence belongs to the stereocilin family. Strongly expressed in the inner ear, detected in the testis, and barely detected in the eye. Detected in the six sensory areas of the inner ear by immunofluorescence. Expressed only in the sensory hair cells and associated with the stereocilia, the stiff microvilli forming the structure for mechanoreception of sound stimulation.

The protein localises to the cell surface. The protein resides in the cell projection. It is found in the kinocilium. It localises to the stereocilium. In terms of biological role, essential to the formation of horizontal top connectors between outer hair cell stereocilia. The polypeptide is Stereocilin (Strc) (Mus musculus (Mouse)).